The chain runs to 203 residues: Microtubule-associated protein Jupiter (203 aa).

A Phosphoserine modification is found at serine 30. Threonine 41 and threonine 102 each carry phosphothreonine. The span at 123–132 (LISKGNYNGK) shows a compositional bias: polar residues. Disordered stretches follow at residues 123 to 163 (LISK…GNPV) and 182 to 203 (NGGS…SGLW). Residues 133-146 (SGSVSSASSSVSSS) show a composition bias toward low complexity. Phosphoserine occurs at positions 135 and 146.

Belongs to the MAP Jupiter family.

The protein localises to the nucleus. Its subcellular location is the cytoplasm. It localises to the cytoskeleton. It is found in the spindle. Functionally, binds to all microtubule populations. This Drosophila mojavensis (Fruit fly) protein is Microtubule-associated protein Jupiter.